The following is a 527-amino-acid chain: EGF domain-specific O-linked N-acetylglucosamine transferase (527 aa).

A signal peptide spans Met-1–Ser-17. Positions Asp-295 to Asp-297 match the Required for optimal activity motif. N-linked (GlcNAc...) asparagine glycosylation is present at Asn-354. The short motif at His-524 to Leu-527 is the Prevents secretion from ER element.

This sequence belongs to the glycosyltransferase 61 family.

It localises to the endoplasmic reticulum lumen. The catalysed reaction is L-seryl-[protein] + UDP-N-acetyl-alpha-D-glucosamine = 3-O-(N-acetyl-beta-D-glucosaminyl)-L-seryl-[protein] + UDP + H(+). It carries out the reaction L-threonyl-[protein] + UDP-N-acetyl-alpha-D-glucosamine = 3-O-(N-acetyl-beta-D-glucosaminyl)-L-threonyl-[protein] + UDP + H(+). Its function is as follows. Catalyzes the transfer of a single N-acetylglucosamine from UDP-GlcNAc to a serine or threonine residue in extracellular proteins resulting in their modification with a beta-linked N-acetylglucosamine (O-GlcNAc). Specifically glycosylates the Thr residue located between the fifth and sixth conserved cysteines of folded EGF-like domains. In Bos taurus (Bovine), this protein is EGF domain-specific O-linked N-acetylglucosamine transferase (EOGT).